A 1118-amino-acid chain; its full sequence is MKKASRSVGSVPKVPGVNKTQTTEKTKPESGSSLSAVTKLSKPGTSASLLKTKSNDDLLAGMASGGGVTMTNGVKAKKSTCASTVSSTTGTTMSTLENKPRTVAGSTARRSTSSGTKESSSSRERIRDRSRLSQSKKLPLAGQGSNDTVLAKRSRSRTNPESDIRMSKSKSDNQISDKAALEAKVNDLLTLAKTKDVEILHLRNELRDMRAQLGLNEDQVEGDEKSEEKEAIVVHQPTDVESTLLQLQEQNTAIREELNQLKNENRMLKDRLNALGFSLEQRLDNSEKLFGYQSLSPEITAGNHSDGGGTLTSSVEGSAPGSMEDLLSQDEHTLMDNQHSNSMDNLDSECSEVYQPLTSSDDALDAPSSSESEGVPSIERSRKGSSGNASEVSVACLTERIHQMEENQHSTAEELQATLQELADLQQITQELNSENERLGEEKVILMESLCQQSDKLEHFSRQIEYFRSLLDEHHISYVIDEDMKSGRYMELEQRYMDLAENARFEREQLLGVQQHLSNTLKMAEQDNKEAQEMIGALKERNHHMERIIESEQKSKTAIASTLEEYKATVASDQIEMNRLKAQLEHEKQKVAELYSIHNSGDKSDIQDLLESVRLDKEKAETLASSLQEELAHTRNDANRLQDAIAKVEDEYRVFQEEAKKQIEDLNVTLEKLRAELDEKETERSDMKETIFELEDEVEQHRAVKLHDNLIISDLENTVKKLQDQKHDMEREIKNLHRRLREESAEWRQFQADLQTAVVIANDIKSEAQEEIGDLKRRLHEAQEKNEKLTKELEEIKSRKQEEERGRVYNYMNAVERDLAALRQGMGLSRRSSTSSEPTPTVKTLIKSFDSASQVPSPAAATIPRTPLSPSPMKTPPAAAVSPMQRHSISGPISASKPLATLTDKRPSYAEIPVQEHLLRTSSTSRPASLPRVPAMESAKSISVSRRSSEEIKRDISAPDGASPASLMAMGTTSPQLSLSSSPTASVTPTTRSRIREERKDPLSALAREYGGSKRNALLKWCQKKTEGYQNIDITNFSSSWNDGLAFCAVLHTYLPAHIPYQELNSQDKRRNFTLAFQAAESVGIKSTLDINEMVRTERPDWQNVMLYVTAIYKYFET.

The segment at 1–176 is disordered; that stretch reads MKKASRSVGS…SKSKSDNQIS (176 aa). The span at 29 to 52 shows a compositional bias: polar residues; the sequence is ESGSSLSAVTKLSKPGTSASLLKT. Residues 79 to 119 are compositionally biased toward low complexity; that stretch reads STCASTVSSTTGTTMSTLENKPRTVAGSTARRSTSSGTKES. Composition is skewed to basic and acidic residues over residues 120 to 131 and 158 to 171; these read SSSRERIRDRSR and TNPESDIRMSKSKS. Residues 193–281 adopt a coiled-coil conformation; sequence KTKDVEILHL…LNALGFSLEQ (89 aa). Disordered stretches follow at residues 299–324 and 359–391; these read ITAGNHSDGGGTLTSSVEGSAPGSME and SSDDALDAPSSSESEGVPSIERSRKGSSGNASE. Over residues 359–373 the composition is skewed to low complexity; that stretch reads SSDDALDAPSSSESE. Coiled-coil stretches lie at residues 396–450 and 488–808; these read CLTE…MESL and RYME…RGRV. Disordered stretches follow at residues 856–879 and 921–1002; these read PSPAAATIPRTPLSPSPMKTPPAA and TSST…RKDP. Residues 937–946 are compositionally biased toward low complexity; sequence ESAKSISVSR. Over residues 947 to 957 the composition is skewed to basic and acidic residues; it reads RSSEEIKRDIS. Low complexity predominate over residues 972–991; sequence TTSPQLSLSSSPTASVTPTT. The region spanning 1012 to 1117 is the Calponin-homology (CH) domain; sequence GSKRNALLKW…YVTAIYKYFE (106 aa).

It belongs to the cytospin-A family. In terms of assembly, may interact with both microtubules and actin cytoskeleton.

The protein localises to the cytoplasm. It is found in the cytoskeleton. It localises to the spindle. Its subcellular location is the cell junction. The protein resides in the gap junction. Its function is as follows. Involved in cytokinesis and spindle organization. May play a role in actin cytoskeleton organization and microtubule stabilization and hence required for proper cell adhesion and migration. This chain is Cytospin-A (SPECC1L), found in Gallus gallus (Chicken).